Consider the following 93-residue polypeptide: Phosphoribosyl-ATP pyrophosphatase (93 aa).

Belongs to the PRA-PH family.

It localises to the cytoplasm. It carries out the reaction 1-(5-phospho-beta-D-ribosyl)-ATP + H2O = 1-(5-phospho-beta-D-ribosyl)-5'-AMP + diphosphate + H(+). It functions in the pathway amino-acid biosynthesis; L-histidine biosynthesis; L-histidine from 5-phospho-alpha-D-ribose 1-diphosphate: step 2/9. The sequence is that of Phosphoribosyl-ATP pyrophosphatase from Corynebacterium aurimucosum (strain ATCC 700975 / DSM 44827 / CIP 107346 / CN-1) (Corynebacterium nigricans).